The sequence spans 295 residues: Ethanolamine ammonia-lyase small subunit (295 aa).

Residues V207, E228, and C258 each contribute to the adenosylcob(III)alamin site.

Belongs to the EutC family. In terms of assembly, the basic unit is a heterodimer which dimerizes to form tetramers. The heterotetramers trimerize; 6 large subunits form a core ring with 6 small subunits projecting outwards. Adenosylcob(III)alamin serves as cofactor.

The protein resides in the bacterial microcompartment. The catalysed reaction is ethanolamine = acetaldehyde + NH4(+). It participates in amine and polyamine degradation; ethanolamine degradation. In terms of biological role, catalyzes the deamination of various vicinal amino-alcohols to oxo compounds. Allows this organism to utilize ethanolamine as the sole source of nitrogen and carbon in the presence of external vitamin B12. This is Ethanolamine ammonia-lyase small subunit from Escherichia coli O7:K1 (strain IAI39 / ExPEC).